Reading from the N-terminus, the 343-residue chain is Anthranilate phosphoribosyltransferase (343 aa).

5-phospho-alpha-D-ribose 1-diphosphate-binding positions include glycine 84, 87–88, threonine 92, 94–97, 112–120, and serine 124; these read GD, NIST, and KHGNRSVSS. Glycine 84 provides a ligand contact to anthranilate. Serine 96 provides a ligand contact to Mg(2+). Position 115 (asparagine 115) interacts with anthranilate. Residue arginine 170 coordinates anthranilate. Residues aspartate 229 and glutamate 230 each coordinate Mg(2+).

The protein belongs to the anthranilate phosphoribosyltransferase family. Homodimer. Mg(2+) serves as cofactor.

It carries out the reaction N-(5-phospho-beta-D-ribosyl)anthranilate + diphosphate = 5-phospho-alpha-D-ribose 1-diphosphate + anthranilate. It participates in amino-acid biosynthesis; L-tryptophan biosynthesis; L-tryptophan from chorismate: step 2/5. Catalyzes the transfer of the phosphoribosyl group of 5-phosphorylribose-1-pyrophosphate (PRPP) to anthranilate to yield N-(5'-phosphoribosyl)-anthranilate (PRA). This chain is Anthranilate phosphoribosyltransferase, found in Stenotrophomonas maltophilia (strain K279a).